The following is a 260-amino-acid chain: Proteasome subunit alpha type-1 (260 aa).

The tract at residues 240 to 260 (PRTTGGAAAAAAPGGAEPMQM) is disordered. Residues 244–260 (GGAAAAAAPGGAEPMQM) show a composition bias toward low complexity.

The protein belongs to the peptidase T1A family. As to quaternary structure, the 26S proteasome consists of a 20S proteasome core and two 19S regulatory subunits. The 20S proteasome core is composed of 28 subunits that are arranged in four stacked rings, resulting in a barrel-shaped structure. The two end rings are each formed by seven alpha subunits, and the two central rings are each formed by seven beta subunits. The catalytic chamber with the active sites is on the inside of the barrel.

It localises to the cytoplasm. Its subcellular location is the nucleus. Its function is as follows. The proteasome is a multicatalytic proteinase complex which is characterized by its ability to cleave peptides with Arg, Phe, Tyr, Leu, and Glu adjacent to the leaving group at neutral or slightly basic pH. The proteasome has an ATP-dependent proteolytic activity. This chain is Proteasome subunit alpha type-1 (pas-6), found in Caenorhabditis elegans.